The primary structure comprises 167 residues: MLGITTLAALPLGNMLFIIIAFLLLMLILKKVAYGPLTKVLDERADKISSDIDGAEVARQEAEKLASQRQAELAETRQNATKVVNDAKASAQKQSDLIVSAANDRAASVSQQAQTDAQKLKEDAISGAKNDVAALSVAIASKLMQKELSLNDQQALIDAYISDLETK.

The chain crosses the membrane as a helical span at residues 9-29 (ALPLGNMLFIIIAFLLLMLIL).

This sequence belongs to the ATPase B chain family. In terms of assembly, F-type ATPases have 2 components, F(1) - the catalytic core - and F(0) - the membrane proton channel. F(1) has five subunits: alpha(3), beta(3), gamma(1), delta(1), epsilon(1). F(0) has three main subunits: a(1), b(2) and c(10-14). The alpha and beta chains form an alternating ring which encloses part of the gamma chain. F(1) is attached to F(0) by a central stalk formed by the gamma and epsilon chains, while a peripheral stalk is formed by the delta and b chains.

The protein localises to the cell membrane. Its function is as follows. F(1)F(0) ATP synthase produces ATP from ADP in the presence of a proton or sodium gradient. F-type ATPases consist of two structural domains, F(1) containing the extramembraneous catalytic core and F(0) containing the membrane proton channel, linked together by a central stalk and a peripheral stalk. During catalysis, ATP synthesis in the catalytic domain of F(1) is coupled via a rotary mechanism of the central stalk subunits to proton translocation. In terms of biological role, component of the F(0) channel, it forms part of the peripheral stalk, linking F(1) to F(0). This Leuconostoc mesenteroides subsp. mesenteroides (strain ATCC 8293 / DSM 20343 / BCRC 11652 / CCM 1803 / JCM 6124 / NCDO 523 / NBRC 100496 / NCIMB 8023 / NCTC 12954 / NRRL B-1118 / 37Y) protein is ATP synthase subunit b.